Consider the following 553-residue polypeptide: Formate--tetrahydrofolate ligase (553 aa).

63 to 70 (TPAGEGKT) is an ATP binding site.

This sequence belongs to the formate--tetrahydrofolate ligase family.

The catalysed reaction is (6S)-5,6,7,8-tetrahydrofolate + formate + ATP = (6R)-10-formyltetrahydrofolate + ADP + phosphate. The protein operates within one-carbon metabolism; tetrahydrofolate interconversion. The sequence is that of Formate--tetrahydrofolate ligase from Oenococcus oeni (strain ATCC BAA-331 / PSU-1).